Reading from the N-terminus, the 663-residue chain is DNA ligase (663 aa).

Residues 33–37, 82–83, and glutamate 112 each bind NAD(+); these read DYSYD and SI. The active-site N6-AMP-lysine intermediate is the lysine 114. Residues arginine 135, glutamate 171, lysine 285, and lysine 309 each coordinate NAD(+). The Zn(2+) site is built by cysteine 403, cysteine 406, cysteine 419, and cysteine 424. In terms of domain architecture, BRCT spans 581–663; sequence DKEAPLQGKV…LRILDAKSVS (83 aa).

Belongs to the NAD-dependent DNA ligase family. LigA subfamily. The cofactor is Mg(2+). It depends on Mn(2+) as a cofactor.

The catalysed reaction is NAD(+) + (deoxyribonucleotide)n-3'-hydroxyl + 5'-phospho-(deoxyribonucleotide)m = (deoxyribonucleotide)n+m + AMP + beta-nicotinamide D-nucleotide.. Functionally, DNA ligase that catalyzes the formation of phosphodiester linkages between 5'-phosphoryl and 3'-hydroxyl groups in double-stranded DNA using NAD as a coenzyme and as the energy source for the reaction. It is essential for DNA replication and repair of damaged DNA. The sequence is that of DNA ligase from Chlamydia trachomatis serovar D (strain ATCC VR-885 / DSM 19411 / UW-3/Cx).